The chain runs to 293 residues: Ribosomal RNA small subunit methyltransferase A (293 aa).

Positions 29, 31, 56, 77, 102, and 127 each coordinate S-adenosyl-L-methionine.

Belongs to the class I-like SAM-binding methyltransferase superfamily. rRNA adenine N(6)-methyltransferase family. RsmA subfamily.

The protein localises to the cytoplasm. The catalysed reaction is adenosine(1518)/adenosine(1519) in 16S rRNA + 4 S-adenosyl-L-methionine = N(6)-dimethyladenosine(1518)/N(6)-dimethyladenosine(1519) in 16S rRNA + 4 S-adenosyl-L-homocysteine + 4 H(+). Its function is as follows. Specifically dimethylates two adjacent adenosines (A1518 and A1519) in the loop of a conserved hairpin near the 3'-end of 16S rRNA in the 30S particle. May play a critical role in biogenesis of 30S subunits. This chain is Ribosomal RNA small subunit methyltransferase A, found in Geobacillus thermodenitrificans (strain NG80-2).